The chain runs to 126 residues: Phosphoribosyl-AMP cyclohydrolase (126 aa).

Aspartate 76 is a Mg(2+) binding site. Position 77 (cysteine 77) interacts with Zn(2+). Positions 78 and 80 each coordinate Mg(2+). Zn(2+)-binding residues include cysteine 94 and cysteine 101.

It belongs to the PRA-CH family. As to quaternary structure, homodimer. Requires Mg(2+) as cofactor. Zn(2+) is required as a cofactor.

It is found in the cytoplasm. It catalyses the reaction 1-(5-phospho-beta-D-ribosyl)-5'-AMP + H2O = 1-(5-phospho-beta-D-ribosyl)-5-[(5-phospho-beta-D-ribosylamino)methylideneamino]imidazole-4-carboxamide. It participates in amino-acid biosynthesis; L-histidine biosynthesis; L-histidine from 5-phospho-alpha-D-ribose 1-diphosphate: step 3/9. Its function is as follows. Catalyzes the hydrolysis of the adenine ring of phosphoribosyl-AMP. The polypeptide is Phosphoribosyl-AMP cyclohydrolase (Ruthia magnifica subsp. Calyptogena magnifica).